The sequence spans 63 residues: Actiflagelin (63 aa).

Intrachain disulfides connect cysteine 3–cysteine 24, cysteine 6–cysteine 11, cysteine 17–cysteine 39, cysteine 43–cysteine 55, and cysteine 56–cysteine 61. Proline 63 bears the Proline amide mark.

Post-translationally, contains 5 disulfide bonds. In terms of tissue distribution, expressed by the venom gland.

The protein localises to the secreted. Its function is as follows. Unknown. In vitro, this toxin activates sperm motility when tested on OF1 male mice. In Walterinnesia aegyptia (Desert black snake), this protein is Actiflagelin.